Consider the following 147-residue polypeptide: Nucleoside diphosphate kinase (147 aa).

Lys-9, Phe-57, Arg-85, Thr-91, Arg-102, and Asn-112 together coordinate ATP. At Thr-91 the chain carries Phosphothreonine. Residue His-115 is the Pros-phosphohistidine intermediate of the active site. Ser-122 bears the Phosphoserine mark.

The protein belongs to the NDK family. Homotetramer. Requires Mg(2+) as cofactor.

It localises to the cytoplasm. The catalysed reaction is a 2'-deoxyribonucleoside 5'-diphosphate + ATP = a 2'-deoxyribonucleoside 5'-triphosphate + ADP. It carries out the reaction a ribonucleoside 5'-diphosphate + ATP = a ribonucleoside 5'-triphosphate + ADP. Major role in the synthesis of nucleoside triphosphates other than ATP. The ATP gamma phosphate is transferred to the NDP beta phosphate via a ping-pong mechanism, using a phosphorylated active-site intermediate. This is Nucleoside diphosphate kinase from Halalkalibacterium halodurans (strain ATCC BAA-125 / DSM 18197 / FERM 7344 / JCM 9153 / C-125) (Bacillus halodurans).